The chain runs to 685 residues: Bifunctional lycopene cyclase/phytoene synthase (685 aa).

The segment at 15-255 (TLSYRHFHLL…LVSACFTFDR (241 aa)) is lycopene beta-cyclase. Transmembrane regions (helical) follow at residues 21–41 (FHLLWTLPLCAVLFLVARPFL), 48–68 (KLILLPIIAFVWTTPWDNLIV), 92–114 (YFFFVIQSLISTLWCTLLTRWAL), 129–149 (LATPAVVVCMLCFVLGLKAAV), 156–176 (YFGMITWWSSLPLALLLWGSV), 187–207 (GLAPFALSVLAPTFYLWASDV), and 231–251 (LPIEEMLFFLVTNLILVSACF). The segment at 262-685 (QSVAENAPPL…RAVSAVYFGV (424 aa)) is phytoene synthase.

This sequence in the N-terminal section; belongs to the lycopene beta-cyclase family. It in the C-terminal section; belongs to the phytoene/squalene synthase family.

The protein localises to the membrane. The catalysed reaction is all-trans-lycopene = gamma-carotene. It carries out the reaction gamma-carotene = all-trans-beta-carotene. It catalyses the reaction 2 (2E,6E,10E)-geranylgeranyl diphosphate = 15-cis-phytoene + 2 diphosphate. Its pathway is carotenoid biosynthesis; beta-carotene biosynthesis. It functions in the pathway carotenoid biosynthesis; phytoene biosynthesis; all-trans-phytoene from geranylgeranyl diphosphate: step 1/1. Its function is as follows. Bifunctional enzyme that catalyzes the reactions from geranylgeranyl diphosphate to phytoene (phytoene synthase) and lycopene to beta-carotene via the intermediate gamma-carotene (lycopene cyclase). This chain is Bifunctional lycopene cyclase/phytoene synthase, found in Sporisorium reilianum (strain SRZ2) (Maize head smut fungus).